A 406-amino-acid chain; its full sequence is Argininosuccinate synthase (406 aa).

ATP is bound by residues 11–19 (AYSGGLDTS) and alanine 38. Residues tyrosine 91 and serine 96 each contribute to the L-citrulline site. Glycine 121 lines the ATP pocket. L-aspartate-binding residues include threonine 123, asparagine 127, and aspartate 128. Asparagine 127 lines the L-citrulline pocket. L-citrulline is bound by residues arginine 131, serine 181, serine 190, glutamate 266, and tyrosine 278.

It belongs to the argininosuccinate synthase family. Type 1 subfamily. In terms of assembly, homotetramer.

The protein resides in the cytoplasm. It carries out the reaction L-citrulline + L-aspartate + ATP = 2-(N(omega)-L-arginino)succinate + AMP + diphosphate + H(+). The protein operates within amino-acid biosynthesis; L-arginine biosynthesis; L-arginine from L-ornithine and carbamoyl phosphate: step 2/3. This is Argininosuccinate synthase from Campylobacter lari (strain RM2100 / D67 / ATCC BAA-1060).